The primary structure comprises 23 residues: Glutamine synthetase (23 aa).

Belongs to the glutamine synthetase family. Oligomer of 12 subunits arranged in the form of two hexagons. Requires Mg(2+) as cofactor.

The protein resides in the cytoplasm. The catalysed reaction is L-glutamate + NH4(+) + ATP = L-glutamine + ADP + phosphate + H(+). The activity of this enzyme could be controlled by adenylation under conditions of abundant glutamine. Involved in nitrogen metabolism via ammonium assimilation. Catalyzes the ATP-dependent biosynthesis of glutamine from glutamate and ammonia. The sequence is that of Glutamine synthetase from Phormidium lapideum.